Here is a 257-residue protein sequence, read N- to C-terminus: MGKAQIIQHQARRILSQSNRNCLFRRSYETLPAANQTLPSRIKTDINQKASIIPLLEQWRKQGYEVNPSHLRGLIKNLSDCKNFTTALEASKWMFKHSVFDNFPEDCAAQLHLVNTVLGLEEAEKMFKNIPEKMRDYSVLLSSYTKPVRTVDKAEATFKKMRELGFLLKPYLFNSMICLYGQLQRLDMVEKLLYKLKKNNMEVGSLKVNNVSRVYANINAMEKFKTWVSKEGIELERDTIVAMAKAYHRAGSIEKAR.

PPR repeat units lie at residues 133–168 and 169–203; these read KMRDYSVLLSSYTKPVRTVDKAEATFKKMRELGFLL and KPYLFNSMICLYGQLQRLDMVEKLLYKLKKNNMEV.

The protein belongs to the PPR family. P subfamily.

This is Putative pentatricopeptide repeat-containing protein At1g43010 from Arabidopsis thaliana (Mouse-ear cress).